The primary structure comprises 259 residues: Early E4 30 kDa protein (259 aa).

The protein belongs to the adenoviridae E4 30 to 34 kDa protein family. Interacts with E1B-55k.

The protein resides in the host nucleus. Its subcellular location is the host cytoplasm. Plays a major role to prevent cellular inhibition of viral genome replication by nuclear bodies. Assembles an SCF-like E3 ubiquitin ligase complex based on the cellular proteins ELOB, ELOC, CUL5 and RBX1, in cooperation with viral E1B-55K. This viral RING-type ligase ubiquitinates cellular substrates prior to proteasomal degradation: p53/TP53, LIG4, MRE11-RAD50-NBS1 (MRN) complex, ITGA3, DAXX and BLM. This chain is Early E4 30 kDa protein, found in Canine adenovirus serotype 2 (strain Toronto A 26-61) (CAdV-2).